The chain runs to 331 residues: Probable 5-dehydro-4-deoxyglucarate dehydratase 2 (331 aa).

A disordered region spans residues 1 to 23 (MSADTDTDTDTGTGTGPDTDTGT). The span at 10–23 (DTGTGTGPDTDTGT) shows a compositional bias: low complexity.

The protein belongs to the DapA family.

It carries out the reaction 5-dehydro-4-deoxy-D-glucarate + H(+) = 2,5-dioxopentanoate + CO2 + H2O. It participates in carbohydrate acid metabolism; D-glucarate degradation; 2,5-dioxopentanoate from D-glucarate: step 2/2. This Streptomyces avermitilis (strain ATCC 31267 / DSM 46492 / JCM 5070 / NBRC 14893 / NCIMB 12804 / NRRL 8165 / MA-4680) protein is Probable 5-dehydro-4-deoxyglucarate dehydratase 2.